Reading from the N-terminus, the 882-residue chain is DNA mismatch repair protein MutS (882 aa).

G626–S633 lines the ATP pocket.

It belongs to the DNA mismatch repair MutS family.

Functionally, this protein is involved in the repair of mismatches in DNA. It is possible that it carries out the mismatch recognition step. This protein has a weak ATPase activity. This is DNA mismatch repair protein MutS from Anaeromyxobacter sp. (strain Fw109-5).